Reading from the N-terminus, the 588-residue chain is Phosphatidylinositol-3,5-bisphosphate 3-phosphatase mtm-1 (588 aa).

In terms of domain architecture, GRAM spans 20-91 (IQESIDLKLL…GQVSRIEKVG (72 aa)). In terms of domain architecture, Myotubularin phosphatase spans 164–543 (GWKIYSAEKE…CGLHVWIDYY (380 aa)). A 1,2-diacyl-sn-glycero-3-phospho-(1D-myo-inositol-3,5-bisphosphate) is bound by residues N293, N316, and I317. N293, N316, and I317 together coordinate a 1,2-diacyl-sn-glycero-3-phospho-(1D-myo-inositol-3-phosphate). C378 (phosphocysteine intermediate) is an active-site residue. A 1,2-diacyl-sn-glycero-3-phospho-(1D-myo-inositol-3,5-bisphosphate) contacts are provided by S379, D380, G381, W382, D383, R384, K420, and R424. Residues S379, D380, G381, W382, D383, and R384 each contribute to the a 1,2-diacyl-sn-glycero-3-phospho-(1D-myo-inositol-3-phosphate) site. Phosphate is bound at residue S379. The phosphate site is built by G381, W382, D383, and R384. R424 contacts a 1,2-diacyl-sn-glycero-3-phospho-(1D-myo-inositol-3-phosphate). Residues 563 to 588 (AQFVDEKKQLLDEIMALDDAAQKLTA) adopt a coiled-coil conformation.

This sequence belongs to the protein-tyrosine phosphatase family. Non-receptor class myotubularin subfamily. Expressed in embryo, larva and in adults. Expressed in a few head and tail neurons. Expressed in hypodermis, body wall and pharyngeal muscles, sheath cells, vulva, distal tip cells and coelomocytes.

The protein resides in the cell membrane. The protein localises to the cell projection. Its subcellular location is the phagocytic cup. It localises to the apical cell membrane. It is found in the cytoplasmic granule membrane. The catalysed reaction is a 1,2-diacyl-sn-glycero-3-phospho-(1D-myo-inositol-3,5-bisphosphate) + H2O = a 1,2-diacyl-sn-glycero-3-phospho-(1D-myo-inositol-5-phosphate) + phosphate. It carries out the reaction a 1,2-diacyl-sn-glycero-3-phospho-(1D-myo-inositol-3-phosphate) + H2O = a 1,2-diacyl-sn-glycero-3-phospho-(1D-myo-inositol) + phosphate. It catalyses the reaction 1,2-dioctanoyl-sn-glycero-3-phospho-(1-D-myo-inositol-3-phosphate) + H2O = 1,2-dioctanoyl-sn-glycero-3-phospho-(1D-myo-inositol) + phosphate. Its function is as follows. Lipid phosphatase that specifically dephosphorylates phosphatidylinositol 3-phosphate (PI3P) and phosphatidylinositol 3,5-bisphosphate (PI(3,5)P2). Negatively regulates accumulation of PI3P on intracellular vesicles. Negatively regulates phagocytosis of apoptotic cells probably by limiting the recruitment and/or the activation of ced-5, ced-2 and ced-12 complex. In addition, may positively regulate phagosome maturation by promoting recycling of apoptotic receptor ced-1 back to the plasma membrane. Essential for embryonic and larval development. May promote migration of distal tip cells. This is Phosphatidylinositol-3,5-bisphosphate 3-phosphatase mtm-1 from Caenorhabditis elegans.